The chain runs to 72 residues: Prophage late control protein OgrK (72 aa).

Functionally, cryptic version of the phage P2 OGR protein which acts as an activator of P2 late transcription. The protein is Prophage late control protein OgrK (ogrK) of Escherichia coli (strain K12).